The following is a 366-amino-acid chain: Sulfate/thiosulfate import ATP-binding protein CysA 2 (366 aa).

Positions 14–243 constitute an ABC transporter domain; that stretch reads LSVHALCRRF…PASRFVAEFV (230 aa). 46–53 serves as a coordination point for ATP; the sequence is GPSGCGKT.

The protein belongs to the ABC transporter superfamily. Sulfate/tungstate importer (TC 3.A.1.6) family. As to quaternary structure, the complex is composed of two ATP-binding proteins (CysA), two transmembrane proteins (CysT and CysW) and a solute-binding protein (CysP).

The protein resides in the cell inner membrane. It carries out the reaction sulfate(out) + ATP + H2O = sulfate(in) + ADP + phosphate + H(+). The catalysed reaction is thiosulfate(out) + ATP + H2O = thiosulfate(in) + ADP + phosphate + H(+). Part of the ABC transporter complex CysAWTP involved in sulfate/thiosulfate import. Responsible for energy coupling to the transport system. The sequence is that of Sulfate/thiosulfate import ATP-binding protein CysA 2 from Chromobacterium violaceum (strain ATCC 12472 / DSM 30191 / JCM 1249 / CCUG 213 / NBRC 12614 / NCIMB 9131 / NCTC 9757 / MK).